The following is a 1270-amino-acid chain: Vigilin (1270 aa).

Residues 1-11 (MSSVAVLTQES) show a composition bias toward polar residues. 2 disordered regions span residues 1–23 (MSSVAVLTQESFAEHRSGLTQQQ) and 28–47 (ALNSEEENDPPTYKEAFPPL). KH domains lie at 150-188 (ASATVAIPKEHHRFVIGKNGEKLQDLELKTATKIQIPRP), 219-260 (DKRA…IPPP), 291-333 (KKKT…IPPT), 360-402 (ANSF…EFTE), 431-473 (INRT…IPPD), 504-545 (ENER…NFPD), 577-619 (VENS…LPGR), 651-693 (ANIT…FPTE), 724-766 (QTKS…FPTS), 798-840 (DNVV…LPTV), and 872-913 (EAQV…FPDR). Residues 911–947 (PDREENPAPVAEPALQENGEEGGEGKDGKDADPSSPR) are disordered. Residues 933–947 (GEGKDGKDADPSSPR) show a composition bias toward basic and acidic residues. 3 consecutive KH domains span residues 970 to 1012 (ALVP…VPAP), 1051 to 1093 (ALRS…FPDK), and 1126 to 1168 (LEQM…FPQS). Positions 1217-1270 (SHEESKVPSKGFVVRDAPCGTVNNEKAPDMSSSEDFPSFGAQVAPKTLPWGPKR) are disordered.

The protein localises to the cytoplasm. The protein is Vigilin (HDLBP) of Gallus gallus (Chicken).